The sequence spans 32 residues: Conotoxin Cltx-4 (32 aa).

4 positions are modified to 4-hydroxyproline: Pro2, Pro24, Pro28, and Pro30. A Serine amide modification is found at Ser32.

Contains 4 disulfide bonds. In terms of tissue distribution, expressed by the venom duct.

The protein localises to the secreted. The sequence is that of Conotoxin Cltx-4 from Californiconus californicus (California cone).